The following is a 179-amino-acid chain: Inner membrane-spanning protein YciB (179 aa).

5 helical membrane passes run 22–42 (IYAATTALIVATAIVLIYSWV), 50–70 (MALITFVLVAVFGGLTLFFHN), 76–96 (WKVTVIYALFAGALLFSQWVM), 121–141 (LAWAVFFILCGLANIYIAFWL), and 149–169 (FKVFGLTALTLVFTLLSGIYI).

It belongs to the YciB family.

Its subcellular location is the cell inner membrane. Functionally, plays a role in cell envelope biogenesis, maintenance of cell envelope integrity and membrane homeostasis. The protein is Inner membrane-spanning protein YciB of Klebsiella pneumoniae (strain 342).